Reading from the N-terminus, the 306-residue chain is Cell division protein ZipA (306 aa).

Residues 1–6 (MENLQL) are Periplasmic-facing. The helical transmembrane segment at 7-27 (VLLLIGAIAIIAVLVHGFWSI) threads the bilayer. Topologically, residues 28–306 (RKQQPKGYKQ…NYIQRIRAQA (279 aa)) are cytoplasmic.

Belongs to the ZipA family. As to quaternary structure, interacts with FtsZ via their C-terminal domains.

It is found in the cell inner membrane. Its function is as follows. Essential cell division protein that stabilizes the FtsZ protofilaments by cross-linking them and that serves as a cytoplasmic membrane anchor for the Z ring. Also required for the recruitment to the septal ring of downstream cell division proteins. This Shewanella halifaxensis (strain HAW-EB4) protein is Cell division protein ZipA.